The sequence spans 201 residues: Large ribosomal subunit protein mL61 (201 aa).

The disordered stretch occupies residues 87–118 (RDDKDAKPSSTPFPTSSADGSSPAPKPAQGER). The span at 94–106 (PSSTPFPTSSADG) shows a compositional bias: polar residues.

It belongs to the mitochondrion-specific ribosomal protein mL61 family. Component of the mitochondrial large ribosomal subunit (mt-LSU). Mature N.crassa 74S mitochondrial ribosomes consist of a small (37S) and a large (54S) subunit. The 37S small subunit contains a 16S ribosomal RNA (16S mt-rRNA) and 32 different proteins. The 54S large subunit contains a 23S rRNA (23S mt-rRNA) and 42 different proteins.

The protein localises to the mitochondrion. Its function is as follows. Component of the mitochondrial ribosome (mitoribosome), a dedicated translation machinery responsible for the synthesis of mitochondrial genome-encoded proteins, including at least some of the essential transmembrane subunits of the mitochondrial respiratory chain. The mitoribosomes are attached to the mitochondrial inner membrane and translation products are cotranslationally integrated into the membrane. The sequence is that of Large ribosomal subunit protein mL61 (mrp49) from Neurospora crassa (strain ATCC 24698 / 74-OR23-1A / CBS 708.71 / DSM 1257 / FGSC 987).